The chain runs to 552 residues: Rqc2 homolog RqcH (552 aa).

2 coiled-coil regions span residues 271–317 and 357–398; these read RDRV…QKGE and NAQR…MLGQ.

The protein belongs to the NEMF family. As to quaternary structure, associates with stalled 50S ribosomal subunits, binds to RqcH. Recombinant protein interacts with the N-terminal 30 kDa of human fibronectin (FN1).

In terms of biological role, key component of the ribosome quality control system (RQC), a ribosome-associated complex that mediates the extraction of incompletely synthesized nascent chains from stalled ribosomes and their subsequent degradation. RqcH recruits Ala-charged tRNA, and with RqcP directs the elongation of stalled nascent chains on 50S ribosomal subunits, leading to non-templated C-terminal alanine extensions (Ala tail). The Ala tail promotes nascent chain degradation. May add between 1 and at least 8 Ala residues. Binds to stalled 50S ribosomal subunits. This is Rqc2 homolog RqcH from Streptococcus suis (strain 05ZYH33).